The following is a 325-amino-acid chain: MNKFKNIAVYGGGSFGTSLASLAAQNCNNVTLFLRDEAIAKEILHNKTNVKYLGDIKLPAHLQATTNLDIIKDFELIIIALPSYAFDDSIKLLKTHSISKDNTLLIATKGFARNPTALLSDRLKTLLPYNPTAFFVGPNLAKELAKNLPASASIASLDIDIANKIAYNLSSKIFTTNVSSDIVTLQVAGALKNIFAIKSGIDLARKQGENARATLIVAALKEIAILSKALGGMQKNSDILLEGVVGDLVLTCYSLGSRNTKFGYELGISSDKKKFLQEYKELAEGREALKLVLDLIKKYNLHMPIISEVASCVIPYVIPAKAGMT.

Ser-14, Phe-15, Arg-35, and Lys-109 together coordinate NADPH. Lys-109 and Gly-137 together coordinate sn-glycerol 3-phosphate. Ala-141 contacts NADPH. Sn-glycerol 3-phosphate contacts are provided by Lys-192, Asp-247, Ser-257, Arg-258, and Asn-259. Lys-192 (proton acceptor) is an active-site residue. Arg-258 contacts NADPH. NADPH-binding residues include Leu-282 and Glu-284.

Belongs to the NAD-dependent glycerol-3-phosphate dehydrogenase family.

The protein resides in the cytoplasm. It catalyses the reaction sn-glycerol 3-phosphate + NAD(+) = dihydroxyacetone phosphate + NADH + H(+). The catalysed reaction is sn-glycerol 3-phosphate + NADP(+) = dihydroxyacetone phosphate + NADPH + H(+). It participates in membrane lipid metabolism; glycerophospholipid metabolism. Its function is as follows. Catalyzes the reduction of the glycolytic intermediate dihydroxyacetone phosphate (DHAP) to sn-glycerol 3-phosphate (G3P), the key precursor for phospholipid synthesis. The polypeptide is Glycerol-3-phosphate dehydrogenase [NAD(P)+] (Rickettsia conorii (strain ATCC VR-613 / Malish 7)).